A 234-amino-acid chain; its full sequence is MSGLHILAFGAHADDVEIGMAGTIAKYTKQGYEVGICDLTEADLSSNGTIELRKEEAKVAARIMGVKTRLNLAMPDRGLYMKEEYIREIVKVIRTYKPKLVFAPYYEDRHPDHANCAKLVEEAIFSAGIRKYMPELSPHRVESFYNYMINGFHKPNFCIDISEYLSIKVEALEAYESQFSTGSDGVKTPLTEGYVETVIAREKMFGKEVGVLYAEGFMSKKPVLLHADLLGGCK.

Positions 12, 15, and 113 each coordinate Zn(2+).

The protein belongs to the PIGL family. As to quaternary structure, homohexamer. Trimer of dimers. Zn(2+) is required as a cofactor.

It carries out the reaction (S)-malyl N-acetyl-alpha-D-glucosaminide + H2O = (S)-malyl alpha-D-glucosaminide + acetate. Its function is as follows. Involved in bacillithiol (BSH) biosynthesis. Catalyzes the second step of the pathway, the deacetylation of N-acetylglucosaminylmalate (GlcNAc-Mal) to glucosamine malate (GlcN-Mal). The chain is N-acetyl-alpha-D-glucosaminyl L-malate deacetylase 1 from Bacillus cereus (strain ATCC 14579 / DSM 31 / CCUG 7414 / JCM 2152 / NBRC 15305 / NCIMB 9373 / NCTC 2599 / NRRL B-3711).